The chain runs to 313 residues: DNA-directed RNA polymerase subunit alpha (313 aa).

The segment at 1-226 is alpha N-terminal domain (alpha-NTD); the sequence is MLEIEKPKIE…EHLQLFVNLN (226 aa). An alpha C-terminal domain (alpha-CTD) region spans residues 243-313; sequence KEKLAEMPIE…MGLSLRKEEE (71 aa).

This sequence belongs to the RNA polymerase alpha chain family. As to quaternary structure, homodimer. The RNAP catalytic core consists of 2 alpha, 1 beta, 1 beta' and 1 omega subunit. When a sigma factor is associated with the core the holoenzyme is formed, which can initiate transcription.

The catalysed reaction is RNA(n) + a ribonucleoside 5'-triphosphate = RNA(n+1) + diphosphate. Functionally, DNA-dependent RNA polymerase catalyzes the transcription of DNA into RNA using the four ribonucleoside triphosphates as substrates. This Carboxydothermus hydrogenoformans (strain ATCC BAA-161 / DSM 6008 / Z-2901) protein is DNA-directed RNA polymerase subunit alpha.